A 216-amino-acid chain; its full sequence is MFKKRVIKDSRVSKRKIGDINEASEDAPDTQVTKKSTLITKKSDIQKKSVVMPRSSPQTPLSKSSSDDAAAVEVVSQKSKKGELKPLAANIKTTIITDFQPDVCKDFQQTGYCGYGDTCKFLHVRDESRQKIPIKKDWEIGGQKEVKEKEDIPFKCVLCKSDYKSPIKTECGHIFCKACFLDRYKAKKKGTCFICHKETNGTMVPVNIDKLSATQV.

Disordered stretches follow at residues Asp19–Leu38 and Ser43–Asp68. The segment covering Ser55–Ser64 has biased composition (low complexity). A C3H1-type zinc finger spans residues Asp98–Asp126. The RING-type zinc-finger motif lies at Cys156–His196.

The protein belongs to the CWC24 family. In terms of assembly, associated with the spliceosome.

The protein localises to the nucleus. In terms of biological role, involved in pre-mRNA splicing. This chain is Pre-mRNA-splicing factor CWC24 (CWC24), found in Candida albicans (strain SC5314 / ATCC MYA-2876) (Yeast).